Reading from the N-terminus, the 367-residue chain is Phospho-N-acetylmuramoyl-pentapeptide-transferase (367 aa).

A run of 10 helical transmembrane segments spans residues 28-48 (GALM…IGWL), 75-95 (TMGG…WADL), 96-116 (TNAY…IGFI), 134-154 (FKLV…THTA), 175-195 (LMIN…VGSG), 206-226 (GLAI…AYVV), 243-263 (AGEI…FLWW), 271-291 (FMGD…AVAI), 295-315 (LVLA…MVQV), and 344-364 (TIVI…LATL).

This sequence belongs to the glycosyltransferase 4 family. MraY subfamily. Mg(2+) is required as a cofactor.

It localises to the cell inner membrane. It carries out the reaction UDP-N-acetyl-alpha-D-muramoyl-L-alanyl-gamma-D-glutamyl-meso-2,6-diaminopimeloyl-D-alanyl-D-alanine + di-trans,octa-cis-undecaprenyl phosphate = di-trans,octa-cis-undecaprenyl diphospho-N-acetyl-alpha-D-muramoyl-L-alanyl-D-glutamyl-meso-2,6-diaminopimeloyl-D-alanyl-D-alanine + UMP. It functions in the pathway cell wall biogenesis; peptidoglycan biosynthesis. In terms of biological role, catalyzes the initial step of the lipid cycle reactions in the biosynthesis of the cell wall peptidoglycan: transfers peptidoglycan precursor phospho-MurNAc-pentapeptide from UDP-MurNAc-pentapeptide onto the lipid carrier undecaprenyl phosphate, yielding undecaprenyl-pyrophosphoryl-MurNAc-pentapeptide, known as lipid I. The sequence is that of Phospho-N-acetylmuramoyl-pentapeptide-transferase from Maricaulis maris (strain MCS10) (Caulobacter maris).